A 954-amino-acid polypeptide reads, in one-letter code: E3 ubiquitin-protein ligase MIB2 (954 aa).

The region spanning 1–80 is the MIB/HERC2 1 domain; the sequence is MDLDPYASMQ…AYDLLLYDNA (80 aa). The ZZ-type zinc finger occupies 86 to 138; it reads HPNIICDCCKKHGIRGMRWKCKMCFDYDLCTQCYMNNKHDLSHAFERYETAHS. The Zn(2+) site is built by Cys91, Cys94, Cys106, Cys109, Cys115, Cys118, His124, and His128. The MIB/HERC2 2 domain maps to 149–227; the sequence is LTRITLKGTF…KVDLKCTVEA (79 aa). 9 ANK repeats span residues 464 to 493, 497 to 526, 530 to 559, 563 to 591, 597 to 626, 631 to 661, 665 to 694, 698 to 726, and 766 to 795; these read QGRT…TVNL, EGDT…GADL, AKCT…DVNL, HGDT…NIDF, QGFN…QLVD, DGFT…DVNV, RNQT…DVNA, DGDT…EMGS, and RGKS…EQQV. 2 consecutive RING-type zinc fingers follow at residues 830 to 865 and 910 to 943; these read CLVC…IKCQ and CPIC…PICR.

Its subcellular location is the cytoplasm. The enzyme catalyses S-ubiquitinyl-[E2 ubiquitin-conjugating enzyme]-L-cysteine + [acceptor protein]-L-lysine = [E2 ubiquitin-conjugating enzyme]-L-cysteine + N(6)-ubiquitinyl-[acceptor protein]-L-lysine.. The protein operates within protein modification; protein ubiquitination. Functionally, E3 ubiquitin-protein ligase that mediates ubiquitination of Delta receptors, which act as ligands of Notch proteins. Positively regulates the Delta-mediated Notch signaling by ubiquitinating the intracellular domain of Delta, leading to endocytosis of Delta receptors. The sequence is that of E3 ubiquitin-protein ligase MIB2 (MIB2) from Gallus gallus (Chicken).